Here is a 260-residue protein sequence, read N- to C-terminus: Resolvase (260 aa).

The Tyr recombinase domain maps to 38–241; it reads ELPKYLLAPE…FALDVAARHR (204 aa). Residues R73, K105, H193, R196, and H219 contribute to the active site. Y228 serves as the catalytic O-(3'-phospho-DNA)-tyrosine intermediate.

It belongs to the 'phage' integrase family.

Functionally, this resolvase acts at the RfsF equivalent resolution sequence of pColBM-CL139. The protein is Resolvase (resD) of Escherichia coli.